The primary structure comprises 306 residues: Elongation factor Ts (306 aa).

The involved in Mg(2+) ion dislocation from EF-Tu stretch occupies residues 80-83 (TDFV).

This sequence belongs to the EF-Ts family.

The protein localises to the cytoplasm. Functionally, associates with the EF-Tu.GDP complex and induces the exchange of GDP to GTP. It remains bound to the aminoacyl-tRNA.EF-Tu.GTP complex up to the GTP hydrolysis stage on the ribosome. The polypeptide is Elongation factor Ts (Clostridium acetobutylicum (strain ATCC 824 / DSM 792 / JCM 1419 / IAM 19013 / LMG 5710 / NBRC 13948 / NRRL B-527 / VKM B-1787 / 2291 / W)).